We begin with the raw amino-acid sequence, 1398 residues long: MAP-homologous protein 1 (1398 aa).

Methionine 1 is modified (N-acetylmethionine). The interval 21-77 (GWLVRPSASTSKSSRPGKSESKANSVAPDIQMDTARPPVFETSVDSSSSILSSNDKG) is disordered. Residues 27–36 (SASTSKSSRP) show a composition bias toward polar residues. Over residues 63 to 73 (SVDSSSSILSS) the composition is skewed to low complexity. At serine 81 the chain carries Phosphoserine. Disordered regions lie at residues 90–144 (NQRA…APAP), 156–186 (HRKK…GAAI), and 191–210 (TATI…PPSY). Polar residues-rich tracts occupy residues 91–102 (QRANAGSTSVPT) and 114–123 (VVETNLSNVE). The segment covering 159–186 (KDQEQQEKERERKERSPSPTHVDRGAAI) has biased composition (basic and acidic residues). Lysine 221 participates in a covalent cross-link: Glycyl lysine isopeptide (Lys-Gly) (interchain with G-Cter in ubiquitin). Threonine 222 is subject to Phosphothreonine. 4 disordered regions span residues 244-270 (HSPE…PDPR), 296-382 (SSAS…PSSH), 395-428 (GNNN…SSME), and 515-548 (NPEE…NNSQ). 4 positions are modified to phosphoserine: serine 309, serine 311, serine 354, and serine 357. The span at 357-371 (SIVDTVDSNSDVSSS) shows a compositional bias: low complexity. Residues 372–381 (AQNNNQTPSS) show a composition bias toward polar residues. A compositionally biased stretch (low complexity) spans 396 to 426 (NNNNNSTNASSLSANVNNPDTSSTSLWSSSS). Basic and acidic residues predominate over residues 521 to 538 (ANAKSKEEMAPQKQNEVE). Phosphothreonine is present on threonine 577. A compositionally biased stretch (low complexity) spans 605-615 (STSSLASMVSS). Disordered regions lie at residues 605–630 (STSS…EILP), 1148–1169 (LKSP…PNSE), and 1203–1223 (DAED…HEDV). The segment covering 1160–1169 (GGNQAQPNSE) has biased composition (polar residues). Residues 1208-1223 (VEFREGDDSNVNHEDV) show a composition bias toward basic and acidic residues. The interval 1227-1258 (DQQFRDEVDIKNKYSIIKRELEHEKLVGGGDL) is tau/MAP repeat-like. A disordered region spans residues 1313 to 1372 (QEETAFRTKDEQQSSQSNDSSANASPTTDPISTGSNTSRTNDNAHIPPTDAPGFDKFMNN). The span at 1325–1337 (QSSQSNDSSANAS) shows a compositional bias: low complexity. Polar residues predominate over residues 1338 to 1355 (PTTDPISTGSNTSRTNDN).

The protein localises to the cytoplasm. It localises to the cytoskeleton. Its subcellular location is the spindle. In terms of biological role, essential for the formation and/or stabilization of microtubules. Binds to microtubules in vitro. In Saccharomyces cerevisiae (strain ATCC 204508 / S288c) (Baker's yeast), this protein is MAP-homologous protein 1 (MHP1).